Consider the following 548-residue polypeptide: Phenylalanine--tRNA ligase beta subunit (548 aa).

Residues 271-346 (LSEAAAKLDP…ISIGYEALGP (76 aa)) form the B5 domain. 4 residues coordinate Mg(2+): aspartate 324, aspartate 330, glutamate 333, and aspartate 334.

This sequence belongs to the phenylalanyl-tRNA synthetase beta subunit family. Type 2 subfamily. In terms of assembly, tetramer of two alpha and two beta subunits. It depends on Mg(2+) as a cofactor.

Its subcellular location is the cytoplasm. It carries out the reaction tRNA(Phe) + L-phenylalanine + ATP = L-phenylalanyl-tRNA(Phe) + AMP + diphosphate + H(+). The chain is Phenylalanine--tRNA ligase beta subunit from Aeropyrum pernix (strain ATCC 700893 / DSM 11879 / JCM 9820 / NBRC 100138 / K1).